Here is a 169-residue protein sequence, read N- to C-terminus: Peptide deformylase (169 aa).

Fe cation-binding residues include Cys-91 and His-133. Glu-134 is a catalytic residue. Residue His-137 participates in Fe cation binding.

The protein belongs to the polypeptide deformylase family. Fe(2+) is required as a cofactor.

The catalysed reaction is N-terminal N-formyl-L-methionyl-[peptide] + H2O = N-terminal L-methionyl-[peptide] + formate. Functionally, removes the formyl group from the N-terminal Met of newly synthesized proteins. Requires at least a dipeptide for an efficient rate of reaction. N-terminal L-methionine is a prerequisite for activity but the enzyme has broad specificity at other positions. This Haemophilus influenzae (strain ATCC 51907 / DSM 11121 / KW20 / Rd) protein is Peptide deformylase.